The chain runs to 502 residues: Lysine--tRNA ligase (502 aa).

E413 and E420 together coordinate Mg(2+).

Belongs to the class-II aminoacyl-tRNA synthetase family. As to quaternary structure, homodimer. The cofactor is Mg(2+).

It localises to the cytoplasm. The enzyme catalyses tRNA(Lys) + L-lysine + ATP = L-lysyl-tRNA(Lys) + AMP + diphosphate. This is Lysine--tRNA ligase from Aromatoleum aromaticum (strain DSM 19018 / LMG 30748 / EbN1) (Azoarcus sp. (strain EbN1)).